The primary structure comprises 490 residues: Cytochrome P450 71A19 (490 aa).

Residues 3-23 form a helical membrane-spanning segment; that stretch reads IILVTLCLTTLLALLLLKSIL. Position 433 (C433) interacts with heme.

Belongs to the cytochrome P450 family. Heme serves as cofactor.

It is found in the membrane. This is Cytochrome P450 71A19 (CYP71A19) from Arabidopsis thaliana (Mouse-ear cress).